Reading from the N-terminus, the 803-residue chain is Phenylalanine--tRNA ligase beta subunit (803 aa).

The tRNA-binding domain maps to 40–153 (ASLDRRIVVG…SSWEIGKPFA (114 aa)). In terms of domain architecture, B5 spans 400–476 (ADLQLLALRP…RLYGYNAIES (77 aa)). Mg(2+) contacts are provided by D454, D460, E463, and E464. One can recognise an FDX-ACB domain in the interval 709-801 (SRFPVVERDI…AESKLGAVIR (93 aa)).

The protein belongs to the phenylalanyl-tRNA synthetase beta subunit family. Type 1 subfamily. As to quaternary structure, tetramer of two alpha and two beta subunits. It depends on Mg(2+) as a cofactor.

The protein localises to the cytoplasm. It catalyses the reaction tRNA(Phe) + L-phenylalanine + ATP = L-phenylalanyl-tRNA(Phe) + AMP + diphosphate + H(+). The polypeptide is Phenylalanine--tRNA ligase beta subunit (Chlorobium chlorochromatii (strain CaD3)).